The following is a 393-amino-acid chain: S-adenosylmethionine synthase 1 (393 aa).

Glutamate 9 is a binding site for Mg(2+). An ATP-binding site is contributed by histidine 15. Glutamate 43 lines the K(+) pocket. Glutamate 56 and glutamine 99 together coordinate L-methionine. Residues 167–169, 235–238, aspartate 246, 252–253, alanine 269, lysine 273, and lysine 277 contribute to the ATP site; these read DGK, SGRF, and RK. Aspartate 246 serves as a coordination point for L-methionine. L-methionine is bound at residue lysine 277.

The protein belongs to the AdoMet synthase family. In terms of assembly, homotetramer. Mn(2+) serves as cofactor. Requires Mg(2+) as cofactor. The cofactor is Co(2+). K(+) is required as a cofactor.

It is found in the cytoplasm. It carries out the reaction L-methionine + ATP + H2O = S-adenosyl-L-methionine + phosphate + diphosphate. It participates in amino-acid biosynthesis; S-adenosyl-L-methionine biosynthesis; S-adenosyl-L-methionine from L-methionine: step 1/1. In terms of biological role, catalyzes the formation of S-adenosylmethionine from methionine and ATP. The reaction comprises two steps that are both catalyzed by the same enzyme: formation of S-adenosylmethionine (AdoMet) and triphosphate, and subsequent hydrolysis of the triphosphate. This is S-adenosylmethionine synthase 1 (METK1) from Picea sitchensis (Sitka spruce).